A 595-amino-acid polypeptide reads, in one-letter code: Coronatine-insensitive protein homolog 1a (595 aa).

One can recognise an F-box domain in the interval 20–62; that stretch reads WVPDEALHLVMGHVEDPRDREAASRVCRRWHRIDALTRKHVTV. Jasmonate-binding residues include R90, R351, Y389, R412, and R499.

In terms of assembly, interacts with TIFY6A/JAZ3, TIFY6B/JAZ4 and TIFY11D/JAZ12 in a coronatine-dependent manner. Interacts with TIFY9/JAZ5, TIFY10A/JAZ6, TIFY10B/JAZ7, TIFY11A/JAZ9 and TIFY11C/JAZ11 in a coronatine-dependent manner.

Functionally, involved in jasmonate (JA) signaling. Required for jasmonate signaling in plant defense responses. Can complement Arabidopsis coi1-1 mutant and restore jasmonate signaling. Required for JA-regulated defense responses to infestation by the leaffolder Cnaphalocrocis medinalis. May act on an initial response of jasmonate-regulated gene expression toward drought tolerance as part of a BHLH148-TIFY11D/JAZ12-COI1A complex. Component of SCF(COI1) E3 ubiquitin ligase complexes, which may mediate the ubiquitination and subsequent proteasomal degradation of target proteins, including TIFY/JAZ family. This is Coronatine-insensitive protein homolog 1a from Oryza sativa subsp. indica (Rice).